The primary structure comprises 141 residues: Putative pre-16S rRNA nuclease (141 aa).

Belongs to the YqgF nuclease family.

Its subcellular location is the cytoplasm. Its function is as follows. Could be a nuclease involved in processing of the 5'-end of pre-16S rRNA. The polypeptide is Putative pre-16S rRNA nuclease (Dictyoglomus turgidum (strain DSM 6724 / Z-1310)).